A 344-amino-acid polypeptide reads, in one-letter code: Follistatin (344 aa).

An N-terminal signal peptide occupies residues 1–29 (MVCARHQPGGLCLLLLLLCQFMEDRSAQA). In terms of domain architecture, TB spans 30–103 (GNCWLRQAKN…TCENVDCGPG (74 aa)). Cystine bridges form between C32–C55, C42–C88, C56–C91, C95–C106, C100–C116, C118–C150, C122–C143, C132–C164, C168–C179, C173–C189, C192–C225, C196–C218, C207–C239, C245–C256, C250–C267, C270–C302, C274–C295, and C284–C316. The Follistatin-like 1 domain maps to 94–117 (TCENVDCGPGKKCRMNKKNKPRCV). The region spanning 112–166 (NKPRCVCAPDCSNITWKGPVCGLDGKTYRNECALLKARCKEQPELEVQYQGKCKK) is the Kazal-like 1 domain. Residue N124 is glycosylated (N-linked (GlcNAc...) asparagine). One can recognise a Follistatin-like 2 domain in the interval 167-190 (TCRDVFCPGSSTCVVDQTNNAYCV). One can recognise a Kazal-like 2 domain in the interval 186–241 (NAYCVTCNRICPEPSSSEQYLCGNDGVTYSSACHLRKATCLLGRSIGLAYEGKCIK). In terms of domain architecture, Follistatin-like 3 spans 244 to 268 (SCEDIQCGGGKKCLWDSKVGRGRCS). Residues 264-318 (RGRCSLCDELCPDSKSDEPVCASDNATYASECAMKEAACSSGVLLEVKHSGSCNS) enclose the Kazal-like 3 domain. A glycan (N-linked (GlcNAc...) asparagine) is linked at N288. Residues 315 to 344 (SCNSISEETEEEEEEEDQDYSFPISSILEW) form a disordered region. Over residues 321–333 (EETEEEEEEEDQD) the composition is skewed to acidic residues.

Interacts with GDF11. Interacts with activin A/INHBA. Interacts with myostatin/MSTN.

It localises to the secreted. Its subcellular location is the nucleus. The protein localises to the nucleolus. Its function is as follows. Multifunctional regulatory protein whose primary function is to antagonize members of the transforming growth factor beta (TGF-beta) superfamily including activin, myostatin, GDF11 or bone morphogenetic proteins (BMPs). Mechanistically, binds to these ligands in the extracellular space, blocking their type II receptor-binding site to inhibit downstream signaling. Plays an essential role in muscle fiber formation and growth both by preventing the repressive effects of myostatin and through SMAD3/AKT/mTOR signaling independently of myostatin. Also promotes neural differentiation by antagonizing the action BMP4. Acts as a specific inhibitor of the biosynthesis and secretion of pituitary follicle stimulating hormone (FSH) by sequestering activin A/INHBA. On the other hand, translocates into the nucleus where it down-regulates rRNA synthesis and ribosome biogenesis to maintain cellular energy homeostasis by binding to rDNA. This is Follistatin from Mus musculus (Mouse).